Reading from the N-terminus, the 583-residue chain is Vivapain-1 (583 aa).

Over 1-34 (MAQDIKIMNLTKSSLEALNRNQMLSKKSSRKILK) the chain is Cytoplasmic. Residues 1–338 (MAQDIKIMNL…SSSGANLLAD (338 aa)) constitute a propeptide, activation peptide. Residues 35–55 (ICMYAILTFAMCGVVLICLTA) form a helical; Signal-anchor for type II membrane protein membrane-spanning segment. The Lumenal portion of the chain corresponds to 56-583 (MSNSDGSLTQ…IGVEVFYPIL (528 aa)). The segment covering 62 to 82 (SLTQSGSHNQSGSLKGLSSTP) has biased composition (polar residues). Disordered stretches follow at residues 62–83 (SLTQ…STPG) and 104–125 (PHGN…ALPN). The N-linked (GlcNAc...) asparagine glycan is linked to Asn70. The segment covering 106–119 (GNRDPTGDDVEKPA) has biased composition (basic and acidic residues). N-linked (GlcNAc...) asparagine glycosylation is found at Asn195 and Asn272. 3 disulfide bridges follow: Cys360–Cys402, Cys395–Cys435, and Cys420–Cys440. Residue Cys363 is part of the active site. An N-linked (GlcNAc...) asparagine glycan is attached at Asn381. N-linked (GlcNAc...) asparagine glycans are attached at residues Asn486 and Asn494. A disulfide bond links Cys489 and Cys572. Catalysis depends on residues His495 and Asn547.

Belongs to the peptidase C1 family.

It is found in the membrane. Functionally, cysteine protease. The sequence is that of Vivapain-1 from Plasmodium vivax (strain Salvador I).